The sequence spans 175 residues: Ribosome maturation factor RimM (175 aa).

The 81-residue stretch at 95–175 (EEGDYYWHDL…TITVDWDAGF (81 aa)) folds into the PRC barrel domain.

This sequence belongs to the RimM family. In terms of assembly, binds ribosomal protein uS19.

It is found in the cytoplasm. Its function is as follows. An accessory protein needed during the final step in the assembly of 30S ribosomal subunit, possibly for assembly of the head region. Essential for efficient processing of 16S rRNA. May be needed both before and after RbfA during the maturation of 16S rRNA. It has affinity for free ribosomal 30S subunits but not for 70S ribosomes. The sequence is that of Ribosome maturation factor RimM from Glaesserella parasuis serovar 5 (strain SH0165) (Haemophilus parasuis).